A 1416-amino-acid chain; its full sequence is DNA-directed RNA polymerase subunit beta (1416 aa).

Residues 1388–1416 (AKAAREQAEGELGGPLGTPRGAAAEKNTA) form a disordered region.

Belongs to the RNA polymerase beta chain family. As to quaternary structure, the RNAP catalytic core consists of 2 alpha, 1 beta, 1 beta' and 1 omega subunit. When a sigma factor is associated with the core the holoenzyme is formed, which can initiate transcription.

It carries out the reaction RNA(n) + a ribonucleoside 5'-triphosphate = RNA(n+1) + diphosphate. In terms of biological role, DNA-dependent RNA polymerase catalyzes the transcription of DNA into RNA using the four ribonucleoside triphosphates as substrates. This chain is DNA-directed RNA polymerase subunit beta, found in Anaeromyxobacter sp. (strain Fw109-5).